We begin with the raw amino-acid sequence, 129 residues long: Lysozyme C (129 aa).

The C-type lysozyme domain maps to 1-129 (KVYGRCELAA…VNAWTRGCRL (129 aa)). Disulfide bonds link Cys6/Cys127, Cys30/Cys115, Cys64/Cys80, and Cys76/Cys94. Residues Glu35 and Asp52 contribute to the active site.

It belongs to the glycosyl hydrolase 22 family. As to quaternary structure, monomer.

The protein resides in the secreted. It catalyses the reaction Hydrolysis of (1-&gt;4)-beta-linkages between N-acetylmuramic acid and N-acetyl-D-glucosamine residues in a peptidoglycan and between N-acetyl-D-glucosamine residues in chitodextrins.. Functionally, lysozymes have primarily a bacteriolytic function; those in tissues and body fluids are associated with the monocyte-macrophage system and enhance the activity of immunoagents. The chain is Lysozyme C (LYZ) from Chrysolophus amherstiae (Lady Amherst's pheasant).